The chain runs to 496 residues: Probable chlorophyll(ide) b reductase NYC1, chloroplastic (496 aa).

Residues 1–43 (MTTLTKIQVYPQVLEHRLFFRDPIRVGSRLTCRERSNRVYVHR) constitute a chloroplast transit peptide. The next 2 membrane-spanning stretches (helical) occupy residues 105 to 125 (YIVT…LSGG) and 132 to 152 (LVWY…ANMV). Residue 166–190 (ITGSTRGLGKALAREFLLSGDRVIV) coordinates NAD(+). A coiled-coil region spans residues 195–224 (SESVDMTVKELEQNLKEIMSNASESARKKL). Tyr330 (proton acceptor) is an active-site residue. Residues 470–490 (WVSVFSLSVVCAFIILQSTTP) form a helical membrane-spanning segment.

The protein belongs to the short-chain dehydrogenases/reductases (SDR) family. As to quaternary structure, interacts with NOL to form a complex that acts as a chlorophyll b reductase. Interacts with HCAR, RCCR, SGR1 and the LHCII complex. Part of a SGR1-CCE-LHCII complex, which acts in chlorophyll breakdown.

Its subcellular location is the plastid. The protein localises to the chloroplast thylakoid membrane. It carries out the reaction 7(1)-hydroxychlorophyllide a + NAD(+) = chlorophyllide b + NADH + H(+). The catalysed reaction is 7(1)-hydroxychlorophyllide a + NADP(+) = chlorophyllide b + NADPH + H(+). In terms of biological role, involved in chlorophyll b degradation. Belongs to the chlorophyll catabolic enzymes (CCEs). This is Probable chlorophyll(ide) b reductase NYC1, chloroplastic (NYC1) from Arabidopsis thaliana (Mouse-ear cress).